The primary structure comprises 424 residues: UPF0597 protein Shewana3_2972 (424 aa).

Belongs to the UPF0597 family.

The sequence is that of UPF0597 protein Shewana3_2972 from Shewanella sp. (strain ANA-3).